A 128-amino-acid chain; its full sequence is Ribonuclease P protein component (128 aa).

It belongs to the RnpA family. In terms of assembly, consists of a catalytic RNA component (M1 or rnpB) and a protein subunit.

The catalysed reaction is Endonucleolytic cleavage of RNA, removing 5'-extranucleotides from tRNA precursor.. RNaseP catalyzes the removal of the 5'-leader sequence from pre-tRNA to produce the mature 5'-terminus. It can also cleave other RNA substrates such as 4.5S RNA. The protein component plays an auxiliary but essential role in vivo by binding to the 5'-leader sequence and broadening the substrate specificity of the ribozyme. This is Ribonuclease P protein component from Prochlorococcus marinus (strain NATL1A).